A 434-amino-acid chain; its full sequence is Prenyltransferase penG (434 aa).

Composition is skewed to polar residues over residues 1 to 14 and 21 to 35; these read MTQD…QTAG and THSN…PSTW. Residues 1-35 form a disordered region; the sequence is MTQDVVTVSSQTAGTIKESGTHSNPDNKTTSPSTW. L-tryptophan contacts are provided by residues 104–105 and Glu108; that span reads EI. Residues Arg122, Lys208, Arg275, Lys277, Tyr279, and Tyr348 each contribute to the substrate site.

It belongs to the tryptophan dimethylallyltransferase family.

The catalysed reaction is yaequinolone E + dimethylallyl diphosphate + H2O = [(1'E)-3'-hydroxy-3',7'-dimethylocta-1',6'-dien-1'-yl]-quinolinone B + diphosphate. The protein operates within secondary metabolite biosynthesis. It functions in the pathway alkaloid biosynthesis. Its pathway is mycotoxin biosynthesis. In terms of biological role, prenyltransferase; part of the gene cluster that mediates the biosynthesis of penigequinolones, potent insecticidal alkaloids that contain a highly modified 10-carbon prenyl group. The first stage is catalyzed by the nonribosomal peptide synthetase penN that condenses anthranilic acid and O-methyl-L-tyrosine to produce 4'-methoxycyclopeptin. 4'-methoxycyclopeptin is then converted to 4'-methoxydehydrocyclopeptin by the ketoglutarate-dependent dioxygenase penM through dehydrogenation to form a double bond between C-alpha and C-beta of the O-methyltyrosine side chain. PenM also converts its first product methoxydehydrocyclopeptin to 4'-methoxycyclopenin. The following conversion of 4'methoxycyclopenin into 4'-methoxyviridicatin is catalyzed by the cyclopenase penL. 4'-methoxyviridicatin is the precursor of quinolone natural products, and is further converted to quinolinone B. The prenyltransferase penI then catalyzes the canonical Friedel-Crafts alkylation of quinolinone B with dimethylallyl cation to yield dimethylallyl quinolone, which is subjected to FAD-dependent dehydrogenation by the FAD-linked oxidoreductase penH to yield conjugated aryl diene. The delta(3') double bond then serves as the site of the second alkylation with DMAPP catalyzed by the prenyltransferase penG to yield a carbenium ion intermediate, which can be attacked by H(2)O to yield a styrenyl quinolone containing a C3'-hydroxyprenyl chain, or undergo cyclization to yield yaequinolones J1 and J2. The conversion of the styrenyl quinolone into the tetrahydrofuran-containing yaequinolone C is performed by the FAD-dependent monooxygenase penE and involves epoxidation of the terminal C7'-C8' olefin, followed by epoxide ring opening initiated by the C3' hydroxyl group. The predicted cysteine hydrolase penJ acts as an epoxide hydrolase that enhances the rate of the 5-exo-tet cyclization step, increasing the yield of yaequinolone C. PenF catalyzes the cationic rearrangement of the epoxide formed by penE (before ring opening to produce yaequinolone C) into yaequinolone D. Finally, the short-chain dehydrogenase/reductase (SDR)-like reductase penD, catalyzes both the dehydration of yaequinolone D and the reduction of the resulting oxonium to yield penigequinolone. This Penicillium thymicola protein is Prenyltransferase penG.